The chain runs to 303 residues: Ribosomal protein uL3 glutamine methyltransferase (303 aa).

The protein belongs to the protein N5-glutamine methyltransferase family. PrmB subfamily.

It catalyses the reaction L-glutaminyl-[ribosomal protein uL3] + S-adenosyl-L-methionine = N(5)-methyl-L-glutaminyl-[ribosomal protein uL3] + S-adenosyl-L-homocysteine + H(+). Its function is as follows. Methylates large ribosomal subunit protein uL3 on a specific glutamine residue. This Neisseria meningitidis serogroup B (strain ATCC BAA-335 / MC58) protein is Ribosomal protein uL3 glutamine methyltransferase.